We begin with the raw amino-acid sequence, 195 residues long: Pyruvoyl-dependent arginine decarboxylase AaxB (195 aa).

The residue at position 53 (Ser-53) is a Pyruvic acid (Ser).

The protein belongs to the pyruvoyl-dependent arginine decarboxylase family. Trimer of an alpha-beta dimer. Pyruvate serves as cofactor.

It localises to the cytoplasm. The enzyme catalyses L-arginine + H(+) = agmatine + CO2. Its function is as follows. Part of the AaxABC system, catalyzes the decarboxylation of L-arginine. The arginine uptake by the bacterium in the macrophage may be a virulence factor against the host innate immune response. The protein is Pyruvoyl-dependent arginine decarboxylase AaxB (aaxB) of Chlamydia caviae (strain ATCC VR-813 / DSM 19441 / 03DC25 / GPIC) (Chlamydophila caviae).